A 391-amino-acid polypeptide reads, in one-letter code: MGYFVPDSHIENLKSYKYQSEDRSLVSKYFLKPFWQRFCHIFPTWMAPNIITLSGFAFIVINVLTVFYYDPNLNTDTPRWTYFSYALGVFLYQTFDGCDGVHARRINQSGPLGELFDHSIDAINSTLSIFIFASETGMGFSYNLMLSQFAMLTNFYLSTWEEYHTHTLYLSEFSGPVEGILIVCVSLILTGIYGKQVIWHTYLFTITVGDKVIDVDTLDIVFSLAVFGLVMNALSAKRNVDKYYRNSTSSANNITQIEQDSAIKGLLPFFAYYASIALLVWMQPSFITLSFILSVGFTGAFTVGRIIVCHLTKQSFPMFNAPMLIPLCQIVLYKICLSLWGIESNKIVFALSWLGFGLSLGVHIMFMNDIIHEFTEYLDVYALSIKRSKLT.

Over 1–49 (MGYFVPDSHIENLKSYKYQSEDRSLVSKYFLKPFWQRFCHIFPTWMAPN) the chain is Lumenal. The helical transmembrane segment at 50 to 69 (IITLSGFAFIVINVLTVFYY) threads the bilayer. Topologically, residues 70–172 (DPNLNTDTPR…YHTHTLYLSE (103 aa)) are cytoplasmic. Residues 173–193 (FSGPVEGILIVCVSLILTGIY) traverse the membrane as a helical segment. Residues 194-211 (GKQVIWHTYLFTITVGDK) are Lumenal-facing. Residues 212–232 (VIDVDTLDIVFSLAVFGLVMN) form a helical membrane-spanning segment. Residues 233 to 264 (ALSAKRNVDKYYRNSTSSANNITQIEQDSAIK) are Cytoplasmic-facing. A helical transmembrane segment spans residues 265–282 (GLLPFFAYYASIALLVWM). Over 283 to 285 (QPS) the chain is Lumenal. A helical membrane pass occupies residues 286–308 (FITLSFILSVGFTGAFTVGRIIV). Topologically, residues 309–321 (CHLTKQSFPMFNA) are cytoplasmic. A helical transmembrane segment spans residues 322-342 (PMLIPLCQIVLYKICLSLWGI). The Lumenal segment spans residues 343 to 346 (ESNK). A helical transmembrane segment spans residues 347–367 (IVFALSWLGFGLSLGVHIMFM). The Cytoplasmic segment spans residues 368-391 (NDIIHEFTEYLDVYALSIKRSKLT).

This sequence belongs to the CDP-alcohol phosphatidyltransferase class-I family. The cofactor is Mg(2+).

The protein localises to the golgi apparatus membrane. It catalyses the reaction CDP-ethanolamine + a 1,2-diacyl-sn-glycerol = a 1,2-diacyl-sn-glycero-3-phosphoethanolamine + CMP + H(+). It carries out the reaction CDP-choline + a 1,2-diacyl-sn-glycerol = a 1,2-diacyl-sn-glycero-3-phosphocholine + CMP + H(+). The enzyme catalyses CDP-N-methylethanolamine + a 1,2-diacyl-sn-glycerol = a 1,2-diacyl-sn-glycero-3-phospho-N-methylethanolamine + CMP + H(+). The catalysed reaction is CDP-N,N-dimethylethanolamine + a 1,2-diacyl-sn-glycerol = a 1,2-diacyl-sn-glycero-3-phospho-N,N-dimethylethanolamine + CMP + H(+). It catalyses the reaction 1,2-di-(9Z-octadecenoyl)-glycerol + CDP-choline = 1,2-di-(9Z-octadecenoyl)-sn-glycero-3-phosphocholine + CMP + H(+). It carries out the reaction 1,2-di-(9Z-octadecenoyl)-glycerol + CDP-ethanolamine = 1,2-di-(9Z-octadecenoyl)-sn-glycero-3-phosphoethanolamine + CMP + H(+). It functions in the pathway phospholipid metabolism; phosphatidylethanolamine biosynthesis; phosphatidylethanolamine from ethanolamine: step 3/3. Its pathway is phospholipid metabolism; phosphatidylcholine biosynthesis; phosphatidylcholine from phosphocholine: step 2/2. Requires a divalent cation activator, and is inhibited by CMP. Activated by phospholipids, especially phosphatidylcholine. Functionally, catalyzes the final step in the CDP-ethanolamine route leading to phosphatidylethanolamine (PE). Can also catalyze the formation of phosphatidylcholine (PC) from CDP-choline, but does not substantially contribute to PC biosynthesis. Preferentially uses CDP-dimethylethanolamine and CDP-propanolamine as aminoalcohol substrates. Shows highest activity toward di-unsaturated diacylglycerol species as lipid substrates. The CDP-ethanolamine pathway may play a role in maintaining the proper PE species distribution. The polypeptide is Choline/ethanolaminephosphotransferase 1 (EPT1) (Saccharomyces cerevisiae (strain ATCC 204508 / S288c) (Baker's yeast)).